The primary structure comprises 134 residues: Translation initiation factor 2 subunit beta (134 aa).

Belongs to the eIF-2-beta/eIF-5 family. Heterotrimer composed of an alpha, a beta and a gamma chain.

EIF-2 functions in the early steps of protein synthesis by forming a ternary complex with GTP and initiator tRNA. This chain is Translation initiation factor 2 subunit beta, found in Pyrobaculum arsenaticum (strain DSM 13514 / JCM 11321 / PZ6).